Here is a 301-residue protein sequence, read N- to C-terminus: Protease HtpX (301 aa).

A run of 2 helical transmembrane segments spans residues 4 to 24 (IGLF…VLFI) and 44 to 64 (TGLL…SLAM). His150 contributes to the Zn(2+) binding site. The active site involves Glu151. His154 lines the Zn(2+) pocket. The next 2 membrane-spanning stretches (helical) occupy residues 165–185 (LIQG…GHFV) and 201–221 (FITS…IVMW). Glu227 contacts Zn(2+).

It belongs to the peptidase M48B family. Zn(2+) is required as a cofactor.

It is found in the cell inner membrane. The protein is Protease HtpX of Alkalilimnicola ehrlichii (strain ATCC BAA-1101 / DSM 17681 / MLHE-1).